We begin with the raw amino-acid sequence, 805 residues long: Polyribonucleotide nucleotidyltransferase (805 aa).

Residues Asp491 and Asp497 each contribute to the Mg(2+) site. In terms of domain architecture, KH spans 558–617 (PRMESMIIDKNKIKNVIGTGGKNVREICEKTGVKIEISQDGTVMIYAVSRDAVEEAKNMI). One can recognise an S1 motif domain in the interval 627 to 694 (GKVFSGVISE…DKDHVQLSMR (68 aa)). The interval 702 to 805 (DLLEHESYSS…GGGNKKPRFF (104 aa)) is disordered. Positions 709–721 (YSSSKKNGPQSGD) are enriched in polar residues.

The protein belongs to the polyribonucleotide nucleotidyltransferase family. Mg(2+) serves as cofactor.

It is found in the cytoplasm. The catalysed reaction is RNA(n+1) + phosphate = RNA(n) + a ribonucleoside 5'-diphosphate. Involved in mRNA degradation. Catalyzes the phosphorolysis of single-stranded polyribonucleotides processively in the 3'- to 5'-direction. The chain is Polyribonucleotide nucleotidyltransferase from Anaplasma marginale (strain St. Maries).